A 177-amino-acid polypeptide reads, in one-letter code: Transcription factor E (177 aa).

The 83-residue stretch at 9–91 (VEELLNELVG…YWRINYDKAL (83 aa)) folds into the HTH TFE/IIEalpha-type domain.

The protein belongs to the TFE family. As to quaternary structure, monomer. Interaction with RNA polymerase subunits RpoF and RpoE is necessary for Tfe stimulatory transcription activity. Able to interact with Tbp and RNA polymerase in the absence of DNA promoter. Interacts both with the preinitiation and elongation complexes.

In terms of biological role, transcription factor that plays a role in the activation of archaeal genes transcribed by RNA polymerase. Facilitates transcription initiation by enhancing TATA-box recognition by TATA-box-binding protein (Tbp), and transcription factor B (Tfb) and RNA polymerase recruitment. Not absolutely required for transcription in vitro, but particularly important in cases where Tbp or Tfb function is not optimal. It dynamically alters the nucleic acid-binding properties of RNA polymerases by stabilizing the initiation complex and destabilizing elongation complexes. Seems to translocate with the RNA polymerase following initiation and acts by binding to the non template strand of the transcription bubble in elongation complexes. This Archaeoglobus fulgidus (strain ATCC 49558 / DSM 4304 / JCM 9628 / NBRC 100126 / VC-16) protein is Transcription factor E.